The sequence spans 204 residues: LexA repressor (204 aa).

The H-T-H motif DNA-binding region spans Val31–Val51. Catalysis depends on for autocatalytic cleavage activity residues Ser128 and Lys165.

This sequence belongs to the peptidase S24 family. In terms of assembly, homodimer.

It carries out the reaction Hydrolysis of Ala-|-Gly bond in repressor LexA.. Functionally, represses a number of genes involved in the response to DNA damage (SOS response), including recA and lexA. In the presence of single-stranded DNA, RecA interacts with LexA causing an autocatalytic cleavage which disrupts the DNA-binding part of LexA, leading to derepression of the SOS regulon and eventually DNA repair. This Syntrophomonas wolfei subsp. wolfei (strain DSM 2245B / Goettingen) protein is LexA repressor.